Consider the following 323-residue polypeptide: Phosphatidylethanolamine:ceramide ethanolaminephosphotransferase (323 aa).

At 1–26 (MAVPPVEMYSGSFWNRMRKPLPLRTQ) the chain is on the cytoplasmic side. The chain crosses the membrane as a helical span at residues 27–47 (VIRFTVVFVIVSFILVVALQI). The Extracellular portion of the chain corresponds to 48-74 (THERMPDPKVTKPLPDLGFELLTKVPG). A helical membrane pass occupies residues 75–95 (MYVLADCCIGFLNILSVFTAF). Residues 96-147 (KLYLLHRHCVGSGEPELPCNIPGVSRFFLSVWLCKENCRIELRNIHTIAWIR) are Cytoplasmic-facing. The helical transmembrane segment at 148–168 (FITSYALLLLSRSIIMVVTSL) threads the bilayer. At 169 to 187 (PNPDDLCQNPPKIENRVKD) the chain is on the extracellular side. Residues 188 to 208 (ILLTVLTAGAGSIHCGDLMYS) traverse the membrane as a helical segment. The Cytoplasmic portion of the chain corresponds to 209–233 (GHTVILTLHLMFHWIYGAMVHWSFR). The helical transmembrane segment at 234-254 (PVVTVVAIFGYYCIVASRFHY) threads the bilayer. Residues 255 to 257 (TDD) are Extracellular-facing. The helical transmembrane segment at 258-278 (VLVAIYLTIATFIAVGHNADG) threads the bilayer. The Cytoplasmic portion of the chain corresponds to 279-323 (APWQLQLFIRWWPCCGANSREVAEDGVPVAIVIKNEEMMNFEGKS).

The protein belongs to the sphingomyelin synthase family.

It is found in the membrane. It catalyses the reaction an N-acylsphing-4-enine + a 1,2-diacyl-sn-glycero-3-phosphoethanolamine = an N-acylsphing-4-enine 1-phosphoethanolamine + a 1,2-diacyl-sn-glycerol. The enzyme catalyses an N-acylsphinganine + a 1,2-diacyl-sn-glycero-3-phosphoethanolamine = an N-acylsphinganine-1-phosphoethanolamine + a 1,2-diacyl-sn-glycerol. Predominantly synthesizes ethanolamine-phosphorylceramide (EPC), with minimal sphingomyelin (SM)/inositol phosphorylceramide (IPC) synthase activity. Specificity is likely to be defined by residues in the lumenal catalytic domain that interact with the polar head groups of the phospholipid donors. EPC is synthesized by both stages of the parasite life cycle, bloodstream forms (BSF) and procyclic forms (PCF), by transferring the phosphoethanolamine from a 1,2-diacyl-sn-glycero-3-phosphoethanolamine to an N-acylsphing-4-enine (ceramide) or an N-acylsphinganine (dihydroceramide). Similarly, SM is synthesized by transferring the phosphocholine from a 1,2-diacyl-sn-glycero-3-phosphocholine to ceramide or dihydroceramide by BSF and PCF, while IPC is confined to PCF. The ceramide/dihydroceramide ratios are skewed towards dihydroceramide in PCF parasites and ceramide in BSF parasites, this is likely due to differential expression and/or regulation of dihydroceramide desaturase, the enzyme responsible for converting dihydroceramide to ceramide. The protein is Phosphatidylethanolamine:ceramide ethanolaminephosphotransferase of Trypanosoma brucei brucei.